Here is a 23-residue protein sequence, read N- to C-terminus: Phallacidin proprotein (23 aa).

Pro1 is a propeptide. The cyclopeptide (Ala-Pro) cross-link spans 2–8; sequence AWLVDCP. Residues 3–7 constitute a cross-link (2'-cysteinyl-6'-hydroxytryptophan sulfoxide (Trp-Cys)); the sequence is WLVDC. A propeptide spanning residues 9-23 is cleaved from the precursor; sequence CVGDDVNRLLARGEK.

The protein belongs to the MSDIN fungal toxin family. Post-translationally, processed by the macrocyclase-peptidase enzyme POPB to yield a toxic cyclic heptapeptide. POPB first removes 10 residues from the N-terminus. Conformational trapping of the remaining peptide forces the enzyme to release this intermediate rather than proceed to macrocyclization. The enzyme rebinds the remaining peptide in a different conformation and catalyzes macrocyclization of the N-terminal 7 residues.

In terms of biological role, major toxin that belongs to the bicyclic heptapeptides called phallotoxins. Although structurally related to amatoxins, phallotoxins have a different mode of action, which is the stabilization of F-actin. Phallotoxins are poisonous when administered parenterally, but not orally because of poor absorption. The protein is Phallacidin proprotein of Amanita fuliginea (East Asian brown death cap).